We begin with the raw amino-acid sequence, 310 residues long: Ribosomal RNA large subunit methyltransferase F (310 aa).

This sequence belongs to the methyltransferase superfamily. METTL16/RlmF family.

The protein localises to the cytoplasm. The enzyme catalyses adenosine(1618) in 23S rRNA + S-adenosyl-L-methionine = N(6)-methyladenosine(1618) in 23S rRNA + S-adenosyl-L-homocysteine + H(+). In terms of biological role, specifically methylates the adenine in position 1618 of 23S rRNA. The sequence is that of Ribosomal RNA large subunit methyltransferase F from Pseudoalteromonas translucida (strain TAC 125).